Here is a 356-residue protein sequence, read N- to C-terminus: Tyrosine recombinase XerS (356 aa).

A Core-binding (CB) domain is found at 16-121 (LMPWYVLEYY…ALSSLYKYLT (106 aa)). Positions 169–354 (EFLEYVDCEY…VNDEQKNALD (186 aa)) constitute a Tyr recombinase domain. Residues Arg210, Lys234, His306, Arg309, and His332 contribute to the active site. The O-(3'-phospho-DNA)-tyrosine intermediate role is filled by Tyr341.

Belongs to the 'phage' integrase family. XerS subfamily.

The protein resides in the cytoplasm. FtsK is required for recombination. Functionally, site-specific tyrosine recombinase, which acts by catalyzing the cutting and rejoining of the recombining DNA molecules. Essential to convert dimers of the bacterial chromosome into monomers to permit their segregation at cell division. The polypeptide is Tyrosine recombinase XerS (Streptococcus mutans serotype c (strain ATCC 700610 / UA159)).